Reading from the N-terminus, the 328-residue chain is Biotin synthase (328 aa).

The 228-residue stretch at 48–275 folds into the Radical SAM core domain; it reads NRIQLSKLLN…KSHVRLTAGR (228 aa). 3 residues coordinate [4Fe-4S] cluster: C63, C67, and C70. Residues C107, C138, C198, and R270 each contribute to the [2Fe-2S] cluster site.

It belongs to the radical SAM superfamily. Biotin synthase family. In terms of assembly, homodimer. [4Fe-4S] cluster is required as a cofactor. The cofactor is [2Fe-2S] cluster.

The catalysed reaction is (4R,5S)-dethiobiotin + (sulfur carrier)-SH + 2 reduced [2Fe-2S]-[ferredoxin] + 2 S-adenosyl-L-methionine = (sulfur carrier)-H + biotin + 2 5'-deoxyadenosine + 2 L-methionine + 2 oxidized [2Fe-2S]-[ferredoxin]. It participates in cofactor biosynthesis; biotin biosynthesis; biotin from 7,8-diaminononanoate: step 2/2. Its function is as follows. Catalyzes the conversion of dethiobiotin (DTB) to biotin by the insertion of a sulfur atom into dethiobiotin via a radical-based mechanism. The sequence is that of Biotin synthase from Brucella ovis (strain ATCC 25840 / 63/290 / NCTC 10512).